A 246-amino-acid chain; its full sequence is MYQDSFYILNSAFSLSEIEVGAHLYWEVAGLKLHGQVFIVSWLVIAALIGFALVGTKDLKQAPQGIQNFMEYVYEFLQDIAKNQIGEEEYRPWVPYIATVFLFIFGANWAGALIPWKLIQLPEGELAAPTNDINVTVALALLTSLSYFYAGLSKKGIGYFARYVQPTPILLPINILEDFTKPLSLSFRLFGNVLADELVVSVFALLVPILIPLPVMTLGLFASSVQALIFSTLSAAYIGEALEDHH.

The next 4 membrane-spanning stretches (helical) occupy residues 35–55 (GQVF…ALVG), 94–114 (VPYI…GALI), 133–153 (INVT…AGLS), and 202–222 (VFAL…GLFA).

Belongs to the ATPase A chain family. As to quaternary structure, F-type ATPases have 2 components, CF(1) - the catalytic core - and CF(0) - the membrane proton channel. CF(1) has five subunits: alpha(3), beta(3), gamma(1), delta(1), epsilon(1). CF(0) has four main subunits: a, b, b' and c.

Its subcellular location is the plastid. It is found in the chloroplast thylakoid membrane. Its function is as follows. Key component of the proton channel; it plays a direct role in the translocation of protons across the membrane. The chain is ATP synthase subunit a, chloroplastic from Rhodomonas salina (Cryptomonas salina).